The chain runs to 316 residues: 4-hydroxy-3-methylbut-2-enyl diphosphate reductase (316 aa).

Cysteine 18 contributes to the [4Fe-4S] cluster binding site. (2E)-4-hydroxy-3-methylbut-2-enyl diphosphate-binding residues include histidine 47 and histidine 80. Residues histidine 47 and histidine 80 each coordinate dimethylallyl diphosphate. The isopentenyl diphosphate site is built by histidine 47 and histidine 80. Cysteine 102 is a [4Fe-4S] cluster binding site. Histidine 130 serves as a coordination point for (2E)-4-hydroxy-3-methylbut-2-enyl diphosphate. Histidine 130 serves as a coordination point for dimethylallyl diphosphate. Isopentenyl diphosphate is bound at residue histidine 130. Residue glutamate 132 is the Proton donor of the active site. Threonine 171 is a binding site for (2E)-4-hydroxy-3-methylbut-2-enyl diphosphate. Cysteine 201 is a binding site for [4Fe-4S] cluster. (2E)-4-hydroxy-3-methylbut-2-enyl diphosphate-binding residues include serine 229, serine 230, asparagine 231, and serine 274. Dimethylallyl diphosphate contacts are provided by serine 229, serine 230, asparagine 231, and serine 274. Isopentenyl diphosphate-binding residues include serine 229, serine 230, asparagine 231, and serine 274.

This sequence belongs to the IspH family. Requires [4Fe-4S] cluster as cofactor.

It carries out the reaction isopentenyl diphosphate + 2 oxidized [2Fe-2S]-[ferredoxin] + H2O = (2E)-4-hydroxy-3-methylbut-2-enyl diphosphate + 2 reduced [2Fe-2S]-[ferredoxin] + 2 H(+). The enzyme catalyses dimethylallyl diphosphate + 2 oxidized [2Fe-2S]-[ferredoxin] + H2O = (2E)-4-hydroxy-3-methylbut-2-enyl diphosphate + 2 reduced [2Fe-2S]-[ferredoxin] + 2 H(+). The protein operates within isoprenoid biosynthesis; dimethylallyl diphosphate biosynthesis; dimethylallyl diphosphate from (2E)-4-hydroxy-3-methylbutenyl diphosphate: step 1/1. Its pathway is isoprenoid biosynthesis; isopentenyl diphosphate biosynthesis via DXP pathway; isopentenyl diphosphate from 1-deoxy-D-xylulose 5-phosphate: step 6/6. Its function is as follows. Catalyzes the conversion of 1-hydroxy-2-methyl-2-(E)-butenyl 4-diphosphate (HMBPP) into a mixture of isopentenyl diphosphate (IPP) and dimethylallyl diphosphate (DMAPP). Acts in the terminal step of the DOXP/MEP pathway for isoprenoid precursor biosynthesis. The protein is 4-hydroxy-3-methylbut-2-enyl diphosphate reductase of Ruegeria sp. (strain TM1040) (Silicibacter sp.).